The sequence spans 1017 residues: Probable isoleucine--tRNA ligase, cytoplasmic (1017 aa).

Positions proline 45–histidine 55 match the 'HIGH' region motif. Residues lysine 609–arginine 613 carry the 'KMSKS' region motif. Residue lysine 612 coordinates ATP.

Belongs to the class-I aminoacyl-tRNA synthetase family.

The protein resides in the cytoplasm. It carries out the reaction tRNA(Ile) + L-isoleucine + ATP = L-isoleucyl-tRNA(Ile) + AMP + diphosphate. This is Probable isoleucine--tRNA ligase, cytoplasmic from Encephalitozoon cuniculi (strain GB-M1) (Microsporidian parasite).